The chain runs to 492 residues: Trk system potassium uptake protein TrkI (492 aa).

The next 10 membrane-spanning stretches (helical) occupy residues 20–40, 47–67, 81–101, 143–163, 196–216, 246–266, 282–302, 334–354, 403–423, and 465–485; these read VLAV…LVLI, ALAF…SWIV, FVLT…PLVL, IMQW…LPFL, IYCG…MSPL, QLLW…VLYI, VQGL…WRVS, AWGA…GCSG, VVAF…GLSL, and WLLC…LVLL.

The protein belongs to the TrkH potassium transport family.

Its subcellular location is the cell inner membrane. Functionally, medium-affinity potassium transport system. Probably interacts with Trk system potassium uptake protein TrkA. Main K(+) transporter in osmotically adapted cells. The protein is Trk system potassium uptake protein TrkI (trkI) of Halomonas elongata (strain ATCC 33173 / DSM 2581 / NBRC 15536 / NCIMB 2198 / 1H9).